A 291-amino-acid polypeptide reads, in one-letter code: uncharacterized protein (291 aa).

6 helical membrane passes run phenylalanine 13–glycine 33, leucine 40–leucine 60, glycine 81–isoleucine 101, phenylalanine 128–leucine 148, valine 158–tyrosine 178, and glycine 220–alanine 240. Residue asparagine 249 is glycosylated (N-linked (GlcNAc...) asparagine). Positions methionine 269–alanine 291 are disordered.

Its subcellular location is the membrane. This is an uncharacterized protein from Encephalitozoon cuniculi (strain GB-M1) (Microsporidian parasite).